A 591-amino-acid chain; its full sequence is MRSHYCGDVNKSHVGQEVTLVGWVNRSRDLGGVVFLDLRDREGLVQVVYDPDLPEVFNVASTLRAEFCVQVKGVVRARPDSQVNAQMKTGEIEVLGKALTIINSSEPLPLSLDNYQNNSEEQRLKYRYLDLRRPEMAQRLMFRAKVTSAVRRFLDSNGFLDIETPILTKATPEGARDYLVPSRTYKGQFFALPQSPQLFKQLLMMSGFDRYYQIVKCFRDEDLRADRQPEFTQIDIETSFMTSEQVMNKTEEMMRGLFLEMLNVDLGEFPRMTYNEAMRRFGSDKPDLRNPLELVDVADLLKDVEFAVFSGPANDEEGRVAALRIPGGASLSRKQIDDYTKFVGIYGAKGLAWMKLNDLTQGLEGIQSPVLKFLNENIVNEIINRTGAQTGDIILFGADQATVVAESMGALRLKAGEDFNLLEGQWRPLWVVDFPMFEKINGSFHAVHHPFTAPRGVTPQELEANPANRVSDAYDMVLNGCELGGGSVRIHNQEMQSAVFRILGITDEEAKEKFGFLLEALRYGTPPHAGLAFGLDRIIMLMTGASSIRDVMAFPKTTTAACPLTNAPGFANPQQLAELGIAVVKTAKTED.

Residue Glu-173 participates in L-aspartate binding. Residues Gln-197–Lys-200 form an aspartate region. Arg-219 serves as a coordination point for L-aspartate. Residues Arg-219–Glu-221 and Gln-228 each bind ATP. Residue His-448 coordinates L-aspartate. Glu-482 contributes to the ATP binding site. Residue Arg-489 participates in L-aspartate binding. An ATP-binding site is contributed by Gly-534–Arg-537.

Belongs to the class-II aminoacyl-tRNA synthetase family. Type 1 subfamily. Homodimer.

The protein resides in the cytoplasm. The enzyme catalyses tRNA(Asp) + L-aspartate + ATP = L-aspartyl-tRNA(Asp) + AMP + diphosphate. Functionally, catalyzes the attachment of L-aspartate to tRNA(Asp) in a two-step reaction: L-aspartate is first activated by ATP to form Asp-AMP and then transferred to the acceptor end of tRNA(Asp). This chain is Aspartate--tRNA ligase, found in Shewanella oneidensis (strain ATCC 700550 / JCM 31522 / CIP 106686 / LMG 19005 / NCIMB 14063 / MR-1).